A 135-amino-acid polypeptide reads, in one-letter code: Protein NrdI (135 aa).

Belongs to the NrdI family.

Its function is as follows. Probably involved in ribonucleotide reductase function. The polypeptide is Protein NrdI (Pectobacterium carotovorum subsp. carotovorum (strain PC1)).